The chain runs to 324 residues: D-erythronate dehydrogenase (324 aa).

Residues Ser-125, Tyr-149, and Lys-153 each contribute to the NAD(+) site. Tyr-149 serves as the catalytic Proton acceptor.

It belongs to the NAD(P)-dependent epimerase/dehydratase family.

The enzyme catalyses D-erythronate + NAD(+) = 2-dehydro-D-erythronate + NADH + H(+). Functionally, catalyzes oxidation of D-erythronate to 2-oxo-tetronate. Can use either NAD(+) or NADP(+) as cosubstrate, with a preference for NAD(+). The protein is D-erythronate dehydrogenase of Cupriavidus necator (strain ATCC 17699 / DSM 428 / KCTC 22496 / NCIMB 10442 / H16 / Stanier 337) (Ralstonia eutropha).